Here is a 481-residue protein sequence, read N- to C-terminus: Protein nucleotidyltransferase YdiU (481 aa).

Gly-85, Gly-87, Arg-88, Lys-108, Asp-120, Gly-121, Arg-172, and Arg-179 together coordinate ATP. Asp-248 acts as the Proton acceptor in catalysis. Mg(2+) contacts are provided by Asn-249 and Asp-258. Asp-258 contributes to the ATP binding site.

Belongs to the SELO family. Requires Mg(2+) as cofactor. Mn(2+) is required as a cofactor.

It carries out the reaction L-seryl-[protein] + ATP = 3-O-(5'-adenylyl)-L-seryl-[protein] + diphosphate. The catalysed reaction is L-threonyl-[protein] + ATP = 3-O-(5'-adenylyl)-L-threonyl-[protein] + diphosphate. It catalyses the reaction L-tyrosyl-[protein] + ATP = O-(5'-adenylyl)-L-tyrosyl-[protein] + diphosphate. The enzyme catalyses L-histidyl-[protein] + UTP = N(tele)-(5'-uridylyl)-L-histidyl-[protein] + diphosphate. It carries out the reaction L-seryl-[protein] + UTP = O-(5'-uridylyl)-L-seryl-[protein] + diphosphate. The catalysed reaction is L-tyrosyl-[protein] + UTP = O-(5'-uridylyl)-L-tyrosyl-[protein] + diphosphate. Its function is as follows. Nucleotidyltransferase involved in the post-translational modification of proteins. It can catalyze the addition of adenosine monophosphate (AMP) or uridine monophosphate (UMP) to a protein, resulting in modifications known as AMPylation and UMPylation. The polypeptide is Protein nucleotidyltransferase YdiU (Cereibacter sphaeroides (strain ATCC 17023 / DSM 158 / JCM 6121 / CCUG 31486 / LMG 2827 / NBRC 12203 / NCIMB 8253 / ATH 2.4.1.) (Rhodobacter sphaeroides)).